Here is a 380-residue protein sequence, read N- to C-terminus: 1-deoxy-D-xylulose 5-phosphate reductoisomerase (380 aa).

Residues S10, G11, S12, I13, G36, K37, N38, and N120 each contribute to the NADPH site. K121 contributes to the 1-deoxy-D-xylulose 5-phosphate binding site. Position 122 (E122) interacts with NADPH. D146 serves as a coordination point for Mn(2+). Residues S147, E148, S172, and H195 each contribute to the 1-deoxy-D-xylulose 5-phosphate site. Residue E148 participates in Mn(2+) binding. G201 provides a ligand contact to NADPH. Residues S208, N213, K214, and E217 each contribute to the 1-deoxy-D-xylulose 5-phosphate site. E217 contacts Mn(2+).

It belongs to the DXR family. Requires Mg(2+) as cofactor. Mn(2+) serves as cofactor.

The catalysed reaction is 2-C-methyl-D-erythritol 4-phosphate + NADP(+) = 1-deoxy-D-xylulose 5-phosphate + NADPH + H(+). It functions in the pathway isoprenoid biosynthesis; isopentenyl diphosphate biosynthesis via DXP pathway; isopentenyl diphosphate from 1-deoxy-D-xylulose 5-phosphate: step 1/6. In terms of biological role, catalyzes the NADPH-dependent rearrangement and reduction of 1-deoxy-D-xylulose-5-phosphate (DXP) to 2-C-methyl-D-erythritol 4-phosphate (MEP). In Bacillus cereus (strain AH187), this protein is 1-deoxy-D-xylulose 5-phosphate reductoisomerase.